The primary structure comprises 90 residues: Small ribosomal subunit protein uS17 (90 aa).

This sequence belongs to the universal ribosomal protein uS17 family. As to quaternary structure, part of the 30S ribosomal subunit.

In terms of biological role, one of the primary rRNA binding proteins, it binds specifically to the 5'-end of 16S ribosomal RNA. The polypeptide is Small ribosomal subunit protein uS17 (Dehalococcoides mccartyi (strain ATCC BAA-2100 / JCM 16839 / KCTC 5957 / BAV1)).